The primary structure comprises 366 residues: Histidinol-phosphate aminotransferase 2 (366 aa).

N6-(pyridoxal phosphate)lysine is present on Lys226.

It belongs to the class-II pyridoxal-phosphate-dependent aminotransferase family. Histidinol-phosphate aminotransferase subfamily. Homodimer. It depends on pyridoxal 5'-phosphate as a cofactor.

It catalyses the reaction L-histidinol phosphate + 2-oxoglutarate = 3-(imidazol-4-yl)-2-oxopropyl phosphate + L-glutamate. It functions in the pathway amino-acid biosynthesis; L-histidine biosynthesis; L-histidine from 5-phospho-alpha-D-ribose 1-diphosphate: step 7/9. The protein is Histidinol-phosphate aminotransferase 2 of Cupriavidus pinatubonensis (strain JMP 134 / LMG 1197) (Cupriavidus necator (strain JMP 134)).